The sequence spans 434 residues: 4-hydroxy-3-methylbut-2-en-1-yl diphosphate synthase (flavodoxin) (434 aa).

The span at 1-15 (MQSEAQSPRSSQICS) shows a compositional bias: polar residues. The interval 1–20 (MQSEAQSPRSSQICSTEPVF) is disordered. Positions 322, 325, 368, and 375 each coordinate [4Fe-4S] cluster.

It belongs to the IspG family. Requires [4Fe-4S] cluster as cofactor.

The enzyme catalyses (2E)-4-hydroxy-3-methylbut-2-enyl diphosphate + oxidized [flavodoxin] + H2O + 2 H(+) = 2-C-methyl-D-erythritol 2,4-cyclic diphosphate + reduced [flavodoxin]. It functions in the pathway isoprenoid biosynthesis; isopentenyl diphosphate biosynthesis via DXP pathway; isopentenyl diphosphate from 1-deoxy-D-xylulose 5-phosphate: step 5/6. In terms of biological role, converts 2C-methyl-D-erythritol 2,4-cyclodiphosphate (ME-2,4cPP) into 1-hydroxy-2-methyl-2-(E)-butenyl 4-diphosphate. In Burkholderia mallei (strain ATCC 23344), this protein is 4-hydroxy-3-methylbut-2-en-1-yl diphosphate synthase (flavodoxin).